The following is a 209-amino-acid chain: Ribosomal RNA large subunit methyltransferase E (209 aa).

Residues Gly-63, Trp-65, Asp-83, Asp-99, and Asp-124 each coordinate S-adenosyl-L-methionine. Lys-164 (proton acceptor) is an active-site residue.

This sequence belongs to the class I-like SAM-binding methyltransferase superfamily. RNA methyltransferase RlmE family.

The protein localises to the cytoplasm. The enzyme catalyses uridine(2552) in 23S rRNA + S-adenosyl-L-methionine = 2'-O-methyluridine(2552) in 23S rRNA + S-adenosyl-L-homocysteine + H(+). In terms of biological role, specifically methylates the uridine in position 2552 of 23S rRNA at the 2'-O position of the ribose in the fully assembled 50S ribosomal subunit. The sequence is that of Ribosomal RNA large subunit methyltransferase E from Aeromonas hydrophila subsp. hydrophila (strain ATCC 7966 / DSM 30187 / BCRC 13018 / CCUG 14551 / JCM 1027 / KCTC 2358 / NCIMB 9240 / NCTC 8049).